A 152-amino-acid polypeptide reads, in one-letter code: MFRGATQINLDSKGRLTVPTRYRAMLNEESQGQMVCTIDLHQPCLLLYTLSEWEIIEEKLSRLSSMNPAERRVQRLLLGHASECQMDSAGRLLLANTLRQHAGLVKEVMLVGQFNKFELWDEQAWYQQVKDDIAAEQSTQEPLSVRLQELSL.

2 SpoVT-AbrB domains span residues 5–52 and 81–124; these read ATQI…TLSE and ASEC…DEQA.

The protein belongs to the MraZ family. Forms oligomers.

The protein localises to the cytoplasm. It is found in the nucleoid. Functionally, negatively regulates its own expression and that of the subsequent genes in the proximal part of the division and cell wall (dcw) gene cluster. Acts by binding directly to DNA. May also regulate the expression of genes outside the dcw cluster. The sequence is that of Transcriptional regulator MraZ from Photorhabdus laumondii subsp. laumondii (strain DSM 15139 / CIP 105565 / TT01) (Photorhabdus luminescens subsp. laumondii).